We begin with the raw amino-acid sequence, 277 residues long: (-)-trans-carveol dehydrogenase (277 aa).

Position 10-32 (10-32) interacts with NAD(+); it reads LITGAARGQGRSHAIKLAEEGAD. Serine 156 contributes to the substrate binding site. The active-site Proton acceptor is tyrosine 169.

The protein belongs to the short-chain dehydrogenases/reductases (SDR) family. As to quaternary structure, homotetramer.

It carries out the reaction (1S,5R)-carveol + NAD(+) = (R)-carvone + NADH + H(+). The catalysed reaction is (1S,5S)-carveol + NAD(+) = (S)-carvone + NADH + H(+). It participates in terpene metabolism; limonene degradation. Its activity is regulated as follows. Competitively inhibited by the product (S)- or (R)-carvone. Catalyzes the oxidation of carveol to carvone, with a strong stereoselectivity since it efficiently converts only the (6S)-stereoisomers, of which (-)-(4R,6S)-trans-carveol is the better substrate. Displays a broad substrate specificity with a preference for substituted cyclohexanols, and does not catalyze the oxidation of primary or short chain aliphatic secondary alcohols. Is also able, albeit more slowly, to oxidize limonene-1,2-diol into 1-hydroxy-2-oxolimonene. The sequence is that of (-)-trans-carveol dehydrogenase (limC) from Rhodococcus erythropolis (Arthrobacter picolinophilus).